Here is a 257-residue protein sequence, read N- to C-terminus: UPF0246 protein BF3795 (257 aa).

It belongs to the UPF0246 family.

The polypeptide is UPF0246 protein BF3795 (Bacteroides fragilis (strain ATCC 25285 / DSM 2151 / CCUG 4856 / JCM 11019 / LMG 10263 / NCTC 9343 / Onslow / VPI 2553 / EN-2)).